The sequence spans 200 residues: Casparian strip membrane protein 2 (200 aa).

At 1-37 the chain is on the cytoplasmic side; sequence MMKSDSVAIDVPESSSVAKRKAPFMANIRDENGGYKK. Residues 38 to 58 traverse the membrane as a helical segment; sequence GLAIFDFILRLGAIAAALGAA. Over 59–88 the chain is Extracellular; that stretch reads STMGTSDETLPFFTQFFQFNAGYDDFPTFQ. The chain crosses the membrane as a helical span at residues 89 to 109; sequence FFVIAMAMVAGYLVLSLPFSI. Residues 110 to 121 are Cytoplasmic-facing; the sequence is VSICRPHAAGPR. A helical transmembrane segment spans residues 122–142; it reads ILLFILDTVALTLNAAAGAAA. Over 143–175 the chain is Extracellular; the sequence is ADIVYLAHNGNQTTNWLAICLQFGDFCREVSGS. The N-linked (GlcNAc...) asparagine glycan is linked to asparagine 153. A helical transmembrane segment spans residues 176–196; that stretch reads VVASFASVVILMVLVVMSGLA. Residues 197 to 200 are Cytoplasmic-facing; the sequence is LRRY.

Belongs to the Casparian strip membrane proteins (CASP) family. As to quaternary structure, homodimer and heterodimers.

It localises to the cell membrane. Functionally, regulates membrane-cell wall junctions and localized cell wall deposition. Required for establishment of the Casparian strip membrane domain (CSD) and the subsequent formation of Casparian strips, a cell wall modification of the root endodermis that determines an apoplastic barrier between the intraorganismal apoplasm and the extraorganismal apoplasm and prevents lateral diffusion. This is Casparian strip membrane protein 2 from Ricinus communis (Castor bean).